The chain runs to 375 residues: Alcohol dehydrogenase 1 (375 aa).

A1 bears the N-acetylalanine mark. Residues C46, H68, C98, C101, C104, C112, and C175 each coordinate Zn(2+). Residues 200-205 (GLGGVG), D224, K229, 293-295 (VGL), and R370 contribute to the NAD(+) site.

This sequence belongs to the zinc-containing alcohol dehydrogenase family. Class-I subfamily. Zn(2+) serves as cofactor.

It is found in the cytoplasm. It carries out the reaction a primary alcohol + NAD(+) = an aldehyde + NADH + H(+). It catalyses the reaction a secondary alcohol + NAD(+) = a ketone + NADH + H(+). This Pelophylax perezi (Perez's frog) protein is Alcohol dehydrogenase 1.